Here is a 427-residue protein sequence, read N- to C-terminus: 3-phosphoshikimate 1-carboxyvinyltransferase (427 aa).

Lys-22, Ser-23, and Arg-27 together coordinate 3-phosphoshikimate. Lys-22 provides a ligand contact to phosphoenolpyruvate. Residues Gly-96 and Arg-124 each coordinate phosphoenolpyruvate. Residues Ser-169, Ser-170, Gln-171, Ser-197, Asp-313, Asn-336, and Lys-340 each contribute to the 3-phosphoshikimate site. Gln-171 is a binding site for phosphoenolpyruvate. Residue Asp-313 is the Proton acceptor of the active site. Phosphoenolpyruvate-binding residues include Arg-344, Arg-386, and Lys-411.

It belongs to the EPSP synthase family. In terms of assembly, monomer.

It localises to the cytoplasm. It carries out the reaction 3-phosphoshikimate + phosphoenolpyruvate = 5-O-(1-carboxyvinyl)-3-phosphoshikimate + phosphate. It participates in metabolic intermediate biosynthesis; chorismate biosynthesis; chorismate from D-erythrose 4-phosphate and phosphoenolpyruvate: step 6/7. Its function is as follows. Catalyzes the transfer of the enolpyruvyl moiety of phosphoenolpyruvate (PEP) to the 5-hydroxyl of shikimate-3-phosphate (S3P) to produce enolpyruvyl shikimate-3-phosphate and inorganic phosphate. This chain is 3-phosphoshikimate 1-carboxyvinyltransferase, found in Salmonella dublin (strain CT_02021853).